Consider the following 206-residue polypeptide: MTSKSVVVLDYGSGNLRSAQRALERVGASVQVTADADAAAAADGLVVPGVGAYEACMTGLRKIGGDRIIAERVAAGRPVLGVCVGMQILFARGVEFSVETSGCGQWPGSVTRLQAPVIPHMGWNVVESGPDSVLFRGLDADTRFYFVHSYAAQQWEGSPEAVLTWSRHEGPFLAAVEDGPLSATQFHPEKSGDAGAAVLRNWIERL.

A Glutamine amidotransferase type-1 domain is found at 5-206 (SVVVLDYGSG…AVLRNWIERL (202 aa)). The active-site Nucleophile is the Cys83. Active-site residues include His187 and Glu189.

As to quaternary structure, heterodimer of HisH and HisF.

The protein resides in the cytoplasm. It carries out the reaction 5-[(5-phospho-1-deoxy-D-ribulos-1-ylimino)methylamino]-1-(5-phospho-beta-D-ribosyl)imidazole-4-carboxamide + L-glutamine = D-erythro-1-(imidazol-4-yl)glycerol 3-phosphate + 5-amino-1-(5-phospho-beta-D-ribosyl)imidazole-4-carboxamide + L-glutamate + H(+). The catalysed reaction is L-glutamine + H2O = L-glutamate + NH4(+). It functions in the pathway amino-acid biosynthesis; L-histidine biosynthesis; L-histidine from 5-phospho-alpha-D-ribose 1-diphosphate: step 5/9. In terms of biological role, IGPS catalyzes the conversion of PRFAR and glutamine to IGP, AICAR and glutamate. The HisH subunit catalyzes the hydrolysis of glutamine to glutamate and ammonia as part of the synthesis of IGP and AICAR. The resulting ammonia molecule is channeled to the active site of HisF. This is Imidazole glycerol phosphate synthase subunit HisH from Mycolicibacterium paratuberculosis (strain ATCC BAA-968 / K-10) (Mycobacterium paratuberculosis).